Reading from the N-terminus, the 188-residue chain is Acireductone dioxygenase (188 aa).

Residues histidine 97, histidine 99, glutamate 103, and histidine 141 each coordinate Fe(2+). 4 residues coordinate Ni(2+): histidine 97, histidine 99, glutamate 103, and histidine 141.

It belongs to the acireductone dioxygenase (ARD) family. In terms of assembly, monomer. It depends on Fe(2+) as a cofactor. Ni(2+) is required as a cofactor.

The enzyme catalyses 1,2-dihydroxy-5-(methylsulfanyl)pent-1-en-3-one + O2 = 3-(methylsulfanyl)propanoate + CO + formate + 2 H(+). It carries out the reaction 1,2-dihydroxy-5-(methylsulfanyl)pent-1-en-3-one + O2 = 4-methylsulfanyl-2-oxobutanoate + formate + 2 H(+). It participates in amino-acid biosynthesis; L-methionine biosynthesis via salvage pathway; L-methionine from S-methyl-5-thio-alpha-D-ribose 1-phosphate: step 5/6. In terms of biological role, catalyzes 2 different reactions between oxygen and the acireductone 1,2-dihydroxy-3-keto-5-methylthiopentene (DHK-MTPene) depending upon the metal bound in the active site. Fe-containing acireductone dioxygenase (Fe-ARD) produces formate and 2-keto-4-methylthiobutyrate (KMTB), the alpha-ketoacid precursor of methionine in the methionine recycle pathway. Ni-containing acireductone dioxygenase (Ni-ARD) produces methylthiopropionate, carbon monoxide and formate, and does not lie on the methionine recycle pathway. This chain is Acireductone dioxygenase, found in Xylella fastidiosa (strain M23).